The sequence spans 38 residues: Conotoxin r7a (38 aa).

A propeptide spanning residues 1–5 is cleaved from the precursor; sequence APAKR. The residue at position 6 (W6) is a 6'-bromotryptophan. 4-carboxyglutamate is present on residues E10 and E11. 3 cysteine pairs are disulfide-bonded: C12/C26, C19/C30, and C25/C35. A 6'-bromotryptophan modification is found at W15. E20 and E31 each carry 4-carboxyglutamate. W38 carries the 6'-bromotryptophan modification.

It belongs to the conotoxin O2 superfamily. Expressed by the venom duct.

The protein resides in the secreted. In terms of biological role, induces a sleep-like state in mice. This is Conotoxin r7a from Conus radiatus (Rayed cone).